The following is a 164-amino-acid chain: Peptidyl-prolyl cis-trans isomerase A (164 aa).

M1 carries the N-acetylmethionine modification. V2 bears the N-acetylvaline; in Peptidyl-prolyl cis-trans isomerase A, N-terminally processed mark. In terms of domain architecture, PPIase cyclophilin-type spans 7–163; sequence FFDIAVDGEP…KKITIADCGQ (157 aa). Position 28 is an N6-acetyllysine; alternate (K28). K28 participates in a covalent cross-link: Glycyl lysine isopeptide (Lys-Gly) (interchain with G-Cter in SUMO2); alternate. Residue K28 forms a Glycyl lysine isopeptide (Lys-Gly) (interchain with G-Cter in ubiquitin); alternate linkage. 2 positions are modified to N6-acetyllysine: K44 and K76. Residues C62 and C161 are joined by a disulfide bond. Phosphoserine is present on S77. K82 bears the N6-acetyllysine; alternate mark. A Glycyl lysine isopeptide (Lys-Gly) (interchain with G-Cter in SUMO2); alternate cross-link involves residue K82. T93 is modified (phosphothreonine). An N-linked (GlcNAc...) asparagine glycan is attached at N108. K125, K131, and K133 each carry N6-acetyllysine.

It belongs to the cyclophilin-type PPIase family. PPIase A subfamily. In terms of assembly, interacts with protein phosphatase PPP3CA/calcineurin A. Interacts with isoform 2 of BSG/CD147. Interacts with FOXO1; the interaction promotes FOXO1 dephosphorylation, nuclear accumulation and transcriptional activity. Interacts with integrin ITGA2B:ITGB3; the interaction is ROS and peptidyl-prolyl cis-trans isomerase (PPIase) activity-dependent and is increased in the presence of thrombin. Interacts with MAP3K5. Interacts with TARDBP; the interaction is dependent on the RNA-binding activity of TARDBP and the PPIase activity of PPIA/CYPA and the acetylation of PPIA/CYPA at Lys-125 favors the interaction. Interacts with HNRNPA1, HNRNPA2B1, HNRNPC, RBMX, HNRNPK and HNRNPM. In terms of processing, acetylation at Lys-125 markedly inhibits catalysis of cis to trans isomerization. PPIA acetylation also antagonizes the immunosuppressive effects of cyclosporine by inhibiting the sequential steps of cyclosporine binding and calcineurin inhibition. Acetylation at Lys-125 favors the interaction with TARDBP.

It is found in the cytoplasm. It localises to the secreted. The protein localises to the nucleus. The enzyme catalyses [protein]-peptidylproline (omega=180) = [protein]-peptidylproline (omega=0). With respect to regulation, binds cyclosporin A (CsA). CsA mediates some of its effects via an inhibitory action on PPIase. Its function is as follows. Catalyzes the cis-trans isomerization of proline imidic peptide bonds in oligopeptides. Exerts a strong chemotactic effect on leukocytes partly through activation of one of its membrane receptors BSG/CD147, initiating a signaling cascade that culminates in MAPK/ERK activation. Activates endothelial cells (ECs) in a proinflammatory manner by stimulating activation of NF-kappa-B and ERK, JNK and p38 MAP-kinases and by inducing expression of adhesion molecules including SELE and VCAM1. Induces apoptosis in ECs by promoting the FOXO1-dependent expression of CCL2 and BCL2L11 which are involved in EC chemotaxis and apoptosis. In response to oxidative stress, initiates proapoptotic and antiapoptotic signaling in ECs via activation of NF-kappa-B and AKT1 and up-regulation of antiapoptotic protein BCL2. Negatively regulates MAP3K5/ASK1 kinase activity, autophosphorylation and oxidative stress-induced apoptosis mediated by MAP3K5/ASK1. Necessary for the assembly of TARDBP in heterogeneous nuclear ribonucleoprotein (hnRNP) complexes and regulates TARDBP binding to RNA UG repeats and TARDBP-dependent expression of HDAC6, ATG7 and VCP which are involved in clearance of protein aggregates. Plays an important role in platelet activation and aggregation. Regulates calcium mobilization and integrin ITGA2B:ITGB3 bidirectional signaling via increased ROS production as well as by facilitating the interaction between integrin and the cell cytoskeleton. Binds heparan sulfate glycosaminoglycans. The protein is Peptidyl-prolyl cis-trans isomerase A (PPIA) of Bos taurus (Bovine).